We begin with the raw amino-acid sequence, 1335 residues long: MDNNNWRPSLPNGEPAMDTGDWRTQLPPDSRQKIVNKIMETLKKHLPFSGPEGINELRRIAARFEEKIFSGALNQTDYLRKISMKMLTMETKSQNAAGSSAAIPAANNGTSIDSIPTNQGQLLPGSLSTNQSQAPQPLLSQTMQNNTASGMTGSTALPSSMPPVSSITNNNTTSVVNQNANMQNVAGMLQDSSGQHGLSSNMFSGPQRQMLGRPHAMSSQQQQQPYLYQQQLQQQLLKQNFQSGNVPNPNSLLPSHIQQQQQNVLQPNQLHSSQQPGVPTSATQPSTVNSAPLQGLHTNQQSSPQLSSQQTTQSMLRQHQSSMLRQHPQSQQASGIHQQQSSLPQQSISPLQQQPTQLMRQQAANSSGIQQKQMMGQHVVGDMQQQHQQRLLNQQNNVMNIQQQQSQQQPLQQPQQQQKQQPPAQQQLMSQQNSLQATHQNPLGTQSNVAGLQQPQQQMLNSQVGNSSLQNNQHSVHMLSQPTVGLQRTHQAGHGLYSSQGQQSQNQPSQQQMMPQLQSHHQQLGLQQQPNLLQQDVQQRLQASGQVTGSLLPPQNVVDQQRQLYQSQRTLPEMPSSSLDSTAQTESANGGDWQEEVYQKIKSMKETYLPDLNEIYQRVAAKLQQDSMPQQQRSDQLEKLRQFKTMLERMIQFLSVSKSNIMPALKDKVAYYEKQIIGFLNMHRPRKPVQQGQLPQSQMQPMQQPQSQTVQDQSHDNQTNPQMQSMSMQGAGPRAQQSSMTNMQSNVLSSRPGVSAPQQNIPSSIPASSLESGQGNTLNNGQQVAMGSMQQNTSQLVNNSSASAQSGLSTLQSNVNQPQLSSSLLQHQHLKQQQDQQMQLKQQFQQRQMQQQQLQARQQQQQQQLQARQQAAQLQQMNDMNDLTSRQGMNVSRGMFQQHSMQGQRANYPLQQLKPGAVSSPQLLQGASPQMSQHLSPQVDQKNTVNKMGTPLQPANSPFVVPSPSSTPLAPSPMQVDSEKPGSSSLSMGNIARQQATGMQGVVQSLAIGTPGISASPLLQEFTSPDGNILNSSTITSGKPSATELPIERLIRAVKSISPQALSSAVSDIGSVVSMVDRIAGSAPGNGSRASVGEDLVAMTKCRLQARNFMTQEGMMATKKMKRHTTAMPLSVASLGGSVGDNYKQFAGSETSDLESTATSDGKKARTETEHALLEEIKEINQRLIDTVVEISDDEDAADPSEVAISSIGCEGTTVRFSFIAVSLSPALKAHLSSTQMSPIQPLRLLVPCSYPNGSPSLLDKLPVETSKENEDLSSKAMARFNILLRSLSQPMSLKDIAKTWDACARAVICEYAQQFGGGTFSSKYGTWEKYVAAS.

Disordered stretches follow at residues 1–27 (MDNN…TQLP), 109–172 (GTSI…NNNT), 190–225 (QDSS…QQQP), 241–389 (FQSG…QHQQ), 401–448 (IQQQ…TQSN), 496–525 (LYSS…QQLG), 567–591 (SQRT…ANGG), and 683–815 (HRPR…QSNV). Polar residues-rich tracts occupy residues 110 to 158 (TSID…TALP), 190 to 207 (QDSS…SGPQ), and 241 to 257 (FQSG…PSHI). The segment covering 258-270 (QQQQQNVLQPNQL) has biased composition (low complexity). Over residues 271 to 299 (HSSQQPGVPTSATQPSTVNSAPLQGLHTN) the composition is skewed to polar residues. The segment covering 300–314 (QQSSPQLSSQQTTQS) has biased composition (low complexity). Residues 315-328 (MLRQHQSSMLRQHP) are compositionally biased toward polar residues. The segment covering 329–362 (QSQQASGIHQQQSSLPQQSISPLQQQPTQLMRQQ) has biased composition (low complexity). The span at 363–374 (AANSSGIQQKQM) shows a compositional bias: polar residues. The segment covering 401-436 (IQQQQSQQQPLQQPQQQQKQQPPAQQQLMSQQNSLQ) has biased composition (low complexity). The span at 437–448 (ATHQNPLGTQSN) shows a compositional bias: polar residues. Low complexity predominate over residues 498–525 (SSQGQQSQNQPSQQQMMPQLQSHHQQLG). Positions 567–588 (SQRTLPEMPSSSLDSTAQTESA) are enriched in polar residues. Residues 688–712 (PVQQGQLPQSQMQPMQQPQSQTVQD) show a composition bias toward low complexity. 3 stretches are compositionally biased toward polar residues: residues 716 to 728 (DNQT…SMSM), 735 to 749 (AQQS…NVLS), and 756 to 815 (APQQ…QSNV). Residues 834 to 882 (QDQQMQLKQQFQQRQMQQQQLQARQQQQQQQLQARQQAAQLQQMNDMND) are a coiled coil. Disordered regions lie at residues 947–986 (KMGT…SSSL) and 1146–1165 (FAGS…GKKA). Residues 957-973 (SPFVVPSPSSTPLAPSP) are compositionally biased toward low complexity. Over residues 1148–1160 (GSETSDLESTATS) the composition is skewed to polar residues.

The protein belongs to the plant Mediator complex subunit 15 family. Component of the Mediator complex.

Its subcellular location is the nucleus. Its function is as follows. Component of the Mediator complex, a coactivator involved in the regulated transcription of nearly all RNA polymerase II-dependent genes. Mediator functions as a bridge to convey information from gene-specific regulatory proteins to the basal RNA polymerase II transcription machinery. The Mediator complex, having a compact conformation in its free form, is recruited to promoters by direct interactions with regulatory proteins and serves for the assembly of a functional preinitiation complex with RNA polymerase II and the general transcription factors. The sequence is that of Mediator of RNA polymerase II transcription subunit 15a (MED15A) from Arabidopsis thaliana (Mouse-ear cress).